The sequence spans 436 residues: GTPase Der (436 aa).

EngA-type G domains lie at 4 to 167 (PTVA…PVEE) and 175 to 351 (IRFS…ESQN). Residues 10–17 (GRPNVGKS), 57–61 (DTGGI), 119–122 (NKVD), 181–188 (GRPNVGKS), 229–233 (DTAGM), and 294–297 (NKWD) contribute to the GTP site. A KH-like domain is found at 352–436 (KRIPSAVLND…PINLIARKRK (85 aa)).

The protein belongs to the TRAFAC class TrmE-Era-EngA-EngB-Septin-like GTPase superfamily. EngA (Der) GTPase family. Associates with the 50S ribosomal subunit.

GTPase that plays an essential role in the late steps of ribosome biogenesis. The protein is GTPase Der of Streptococcus agalactiae serotype Ia (strain ATCC 27591 / A909 / CDC SS700).